A 520-amino-acid chain; its full sequence is Cytochrome P450 6d3 (520 aa).

Position 461 (Cys461) interacts with heme.

Belongs to the cytochrome P450 family. It depends on heme as a cofactor.

The protein resides in the endoplasmic reticulum membrane. The protein localises to the microsome membrane. In terms of biological role, metabolizes pyrethroid insecticides and other xenobiotics. In Musca domestica (House fly), this protein is Cytochrome P450 6d3 (CYP6D3).